A 214-amino-acid polypeptide reads, in one-letter code: 3-isopropylmalate dehydratase small subunit (214 aa).

It belongs to the LeuD family. LeuD type 1 subfamily. Heterodimer of LeuC and LeuD.

The catalysed reaction is (2R,3S)-3-isopropylmalate = (2S)-2-isopropylmalate. It functions in the pathway amino-acid biosynthesis; L-leucine biosynthesis; L-leucine from 3-methyl-2-oxobutanoate: step 2/4. Catalyzes the isomerization between 2-isopropylmalate and 3-isopropylmalate, via the formation of 2-isopropylmaleate. In Pseudomonas fluorescens (strain ATCC BAA-477 / NRRL B-23932 / Pf-5), this protein is 3-isopropylmalate dehydratase small subunit.